Here is a 518-residue protein sequence, read N- to C-terminus: Putative ribose/galactose/methyl galactoside import ATP-binding protein (518 aa).

Residues 1-22 (MSIAVLDRPMSRQDTPSASSVP) are disordered. Over residues 12–22 (RQDTPSASSVP) the composition is skewed to polar residues. 2 consecutive ABC transporter domains span residues 29–265 (LEVR…VGRE) and 275–515 (VPIG…VMEL). 61-68 (GENGAGKS) lines the ATP pocket.

This sequence belongs to the ABC transporter superfamily. Carbohydrate importer 2 (CUT2) (TC 3.A.1.2) family.

It is found in the cell inner membrane. It carries out the reaction D-ribose(out) + ATP + H2O = D-ribose(in) + ADP + phosphate + H(+). The catalysed reaction is D-galactose(out) + ATP + H2O = D-galactose(in) + ADP + phosphate + H(+). In terms of biological role, part of an ABC transporter complex involved in carbohydrate import. Could be involved in ribose, galactose and/or methyl galactoside import. Responsible for energy coupling to the transport system. In Ralstonia nicotianae (strain ATCC BAA-1114 / GMI1000) (Ralstonia solanacearum), this protein is Putative ribose/galactose/methyl galactoside import ATP-binding protein.